Consider the following 327-residue polypeptide: Protein EMSY-LIKE 1 (327 aa).

The 88-residue stretch at Met1 to Leu88 folds into the ENT domain. Residues Glu32–Lys58 are a coiled coil. 2 disordered regions span residues Gly206–Ile257 and Ala305–Gly327. A compositionally biased stretch (basic residues) spans Gly214–Gln232. Positions Leu281–Asp306 form a coiled coil. At Ser308 the chain carries Phosphoserine. The segment covering Tyr318–Gly327 has biased composition (basic and acidic residues).

As to quaternary structure, isoform 1 interacts with EDM2 in nucleus.

It is found in the nucleus. Functionally, probably involved in the regulation of chromatin states. Contributes to RPP7-mediated and basal immunity, especially against Hyaloperonospora arabidopsidis isolate Hiks1. Regulates negatively EDM2-dependent floral transition. This chain is Protein EMSY-LIKE 1, found in Arabidopsis thaliana (Mouse-ear cress).